Here is an 883-residue protein sequence, read N- to C-terminus: Pre-mRNA-splicing factor syf1 homolog (883 aa).

HAT repeat units follow at residues 13-45 (INFEVEDVPYEEEILRNAYSVKHWLRYIDHKAK), 46-78 (APNNGVNMVYERALKELPGSYKIWHNYLRTRRK), 88-120 (PMYEEVNSAFERALVFMHKMPRIWMDYGAFMTS), 122-156 (CKITRTRHVFDRALRALPITQHGRIWPLYLQFVRR), 158-190 (EMPETALRVYRRYLKLFPEDTEEYVDYLQEADR), 268-303 (GLFDRARDIYEEAIQTVTTVRDFTQVFDEYAQFEEL), 368-406 (DKPAEIISTYTEAVQTVQPKQAVGKLHTLWVEFAKFYEA), 463-495 (KRKIAYYDDTETVQARLHRSLKVWSMYADLEES), 531-565 (NYFEEAYRAYEKGISLFKWPNVYDIWNSYLTKFLE), 570-604 (TKLERARDLFEQCLDQCPPEHAKYFYLLYAKLEEE), 642-676 (YGLPRTREIYEKAIESLPEQNMRHMCVKFAELETK), and 678-712 (GEVDRARAIYAHCSQVCDPRITADFWQTWKEFEVR). Disordered stretches follow at residues 794-851 (RGET…DEEG) and 864-883 (IPAKVFGSLKPSNQGDSDGE). The span at 812-834 (DEIDIGDSDEDDEEEDDDEENEM) shows a compositional bias: acidic residues. Composition is skewed to polar residues over residues 835-844 (TNENQASAAV) and 873-883 (KPSNQGDSDGE).

Belongs to the crooked-neck family. As to quaternary structure, component of the NTC(Nineteen)/Prp19 complex composed of at least fand, Prp19,CG9667/ISY1 and Cdc5/CDC5L. Within the complex, interacts with Prp19 and ISY1/CG9667.

The protein resides in the nucleus. Its function is as follows. Subunit of the NTC(Nineteen)/Prp19 complex, which is part of the spliceosome. The complex participates in spliceosome assembly, its remodeling and is required for efficient spliceosome activation. Essential for efficient pre-mRNA splicing. In embryos, efficient pre-mRNA splicing of zygotic transcripts is essential during dynamic cellular processes that require rapid division and/or dramatic changes in gene expression such as blastoderm cellularization, tracheal branching morphogenesis, Malpighian morphogenesis and epidermal development. Part of its role in promoting embryo tracheal development is also due to specifically splicing bnl transcripts which results in the activation of the BNL-FGF pathway. In Drosophila melanogaster (Fruit fly), this protein is Pre-mRNA-splicing factor syf1 homolog.